A 170-amino-acid chain; its full sequence is ATP synthase subunit b (170 aa).

A helical transmembrane segment spans residues 30-50; that stretch reads FFFVLAIFLVVLAVIGTFVVP.

It belongs to the ATPase B chain family. As to quaternary structure, F-type ATPases have 2 components, F(1) - the catalytic core - and F(0) - the membrane proton channel. F(1) has five subunits: alpha(3), beta(3), gamma(1), delta(1), epsilon(1). F(0) has three main subunits: a(1), b(2) and c(10-14). The alpha and beta chains form an alternating ring which encloses part of the gamma chain. F(1) is attached to F(0) by a central stalk formed by the gamma and epsilon chains, while a peripheral stalk is formed by the delta and b chains.

It is found in the cell membrane. F(1)F(0) ATP synthase produces ATP from ADP in the presence of a proton or sodium gradient. F-type ATPases consist of two structural domains, F(1) containing the extramembraneous catalytic core and F(0) containing the membrane proton channel, linked together by a central stalk and a peripheral stalk. During catalysis, ATP synthesis in the catalytic domain of F(1) is coupled via a rotary mechanism of the central stalk subunits to proton translocation. Functionally, component of the F(0) channel, it forms part of the peripheral stalk, linking F(1) to F(0). The sequence is that of ATP synthase subunit b from Mycobacterium marinum (strain ATCC BAA-535 / M).